The following is a 188-amino-acid chain: MSIKSDRWIRHMAEEHGMIEPFSPRQVRHVEGNSIISYGLSSYGYDIRCAGEFKVFTNVRSVIVDPKNFSEHSFVDFTGDTCIIPPNSFALARTLEYFRIPRNVLTICLGKSTYARCGIIVNVTPFEPEWEGYVTLEFSNTTPLPAKIYANEGVAQVLFLESDEVCEVSYADRGGKYQGQSGVTLPKA.

DCTP contacts are provided by residues 111–116 (KSTYAR), 135–137 (TLE), Gln156, Tyr170, and Gln180. Glu137 (proton donor/acceptor) is an active-site residue.

Belongs to the dCTP deaminase family. Homotrimer.

It carries out the reaction dCTP + H2O + H(+) = dUTP + NH4(+). Its pathway is pyrimidine metabolism; dUMP biosynthesis; dUMP from dCTP (dUTP route): step 1/2. Catalyzes the deamination of dCTP to dUTP. The chain is dCTP deaminase from Acidithiobacillus ferrooxidans (strain ATCC 23270 / DSM 14882 / CIP 104768 / NCIMB 8455) (Ferrobacillus ferrooxidans (strain ATCC 23270)).